Consider the following 505-residue polypeptide: Ikaros family zinc finger protein (505 aa).

4 C2H2-type zinc fingers span residues 18–40 (LTCE…KRSH), 46–68 (FQCN…VKLH), 74–96 (FKCS…IRTH), and 102–128 (YKCN…PGFH). 2 stretches are compositionally biased toward polar residues: residues 262-273 (FLNTPSPVTRSA) and 309-327 (RFQH…SQQP). 2 disordered regions span residues 262 to 296 (FLNT…DIGS) and 309 to 440 (RFQH…VSGS). Residues 336 to 345 (ILGGSLGGIC) are compositionally biased toward gly residues. The segment covering 366 to 377 (ATSSPSNSCPDS) has biased composition (polar residues). A compositionally biased stretch (low complexity) spans 393-406 (GSGSSTSRPNGSTG). A compositionally biased stretch (basic and acidic residues) spans 409 to 419 (HRPEMHQDNGR). The span at 424 to 439 (SGASDSSSLPTYNVSG) shows a compositional bias: polar residues. 2 C2H2-type zinc fingers span residues 448–470 (YPCH…MGCH) and 476–500 (FECN…RGEH).

It belongs to the Ikaros C2H2-type zinc-finger protein family. In terms of assembly, heterodimer and homodimer with other IKAROS family members. In terms of tissue distribution, expression is strongest in the blood, gills and intestine.

The protein resides in the nucleus. The chain is Ikaros family zinc finger protein from Myxine glutinosa (Atlantic hagfish).